The following is a 345-amino-acid chain: Nicotinate-nucleotide--dimethylbenzimidazole phosphoribosyltransferase (345 aa).

The Proton acceptor role is filled by Glu-311.

This sequence belongs to the CobT family.

The catalysed reaction is 5,6-dimethylbenzimidazole + nicotinate beta-D-ribonucleotide = alpha-ribazole 5'-phosphate + nicotinate + H(+). It functions in the pathway nucleoside biosynthesis; alpha-ribazole biosynthesis; alpha-ribazole from 5,6-dimethylbenzimidazole: step 1/2. Functionally, catalyzes the synthesis of alpha-ribazole-5'-phosphate from nicotinate mononucleotide (NAMN) and 5,6-dimethylbenzimidazole (DMB). This chain is Nicotinate-nucleotide--dimethylbenzimidazole phosphoribosyltransferase, found in Janthinobacterium sp. (strain Marseille) (Minibacterium massiliensis).